The following is a 435-amino-acid chain: Actin-like protein 7A (435 aa).

The segment at 1 to 64 (MWAPPAAIMG…TESKAAKERP (64 aa)) is disordered. Residues 20–31 (QAPLQTQALQTA) are compositionally biased toward low complexity. The tract at residues 31-51 (ASLRDGPAKRAVWVRHTSSEP) is required for interaction with TES. A compositionally biased stretch (basic and acidic residues) spans 55 to 64 (TESKAAKERP).

Belongs to the actin family. In terms of assembly, interacts (via N-terminus) with TES (via LIM domain 2). Heterodimer with TES; the heterodimer interacts with ENAH to form a heterotrimer. Interacts with ACTL9. Interacts with CYLC1; the interaction may be relevant for proper acrosome attachment to the nuclear envelope. Strongly expressed in testis. Also expressed in other tissues.

Its subcellular location is the cytoplasm. It localises to the cytoskeleton. It is found in the golgi apparatus. The protein resides in the nucleus. The protein localises to the cytoplasmic vesicle. Its subcellular location is the secretory vesicle. It localises to the acrosome. Functionally, essential for normal spermatogenesis and male fertility. Required for normal sperm head morphology, acroplaxome formation, acrosome attachment, and acrosome granule stability. May anchor and stabilize acrosomal adherence to the acroplaxome at least in part by facilitating the presence of F-actin in the subacrosomal space. May play an important role in formation and fusion of Golgi-derived vesicles during acrosome biogenesis. The polypeptide is Actin-like protein 7A (ACTL7A) (Homo sapiens (Human)).